The sequence spans 408 residues: Glutathione-independent formaldehyde dehydrogenase (408 aa).

A Zn(2+)-binding site is contributed by C61. 3 residues coordinate NAD(+): G62, S63, and H66. Zn(2+)-binding residues include H82, C112, C115, C118, C126, and D184. NAD(+)-binding residues include V212, D232, R237, V277, H284, P311, L313, G348, and T350.

This sequence belongs to the zinc-containing alcohol dehydrogenase family. Zn(2+) serves as cofactor.

The enzyme catalyses formaldehyde + NAD(+) + H2O = formate + NADH + 2 H(+). With respect to regulation, activity is not inhibited by EDTA, which is probably not sufficient to displace the bound metal. Its function is as follows. Dehydrogenase that catalyzes the NAD(+)-dependent oxidation of formaldehyde. Exhibits lower activity with acetaldehyde (about 10-fold lower than for formaldehyde), but cannot use methanol, ethanol, 1-butanol, glyoxal or formic acid. Is involved in formaldehyde detoxification. In Bacillus subtilis (strain 168), this protein is Glutathione-independent formaldehyde dehydrogenase.